Consider the following 188-residue polypeptide: dCTP deaminase (188 aa).

DCTP contacts are provided by residues Lys-111–Arg-116, Thr-135–Glu-137, Gln-156, Tyr-170, Lys-179, and Gln-180. The Proton donor/acceptor role is filled by Glu-137.

Belongs to the dCTP deaminase family. Homotrimer.

It carries out the reaction dCTP + H2O + H(+) = dUTP + NH4(+). The protein operates within pyrimidine metabolism; dUMP biosynthesis; dUMP from dCTP (dUTP route): step 1/2. Catalyzes the deamination of dCTP to dUTP. In Orientia tsutsugamushi (strain Ikeda) (Rickettsia tsutsugamushi), this protein is dCTP deaminase.